The sequence spans 549 residues: Cell pattern formation-associated protein StuA (549 aa).

In terms of domain architecture, HTH APSES-type spans 86 to 192 (RVTATLWEDE…HNIGALLYHP (107 aa)). A DNA-binding region (H-T-H motif) is located at residues 120 to 141 (GTKLLNVAGMTRGRRDGILKSE). Disordered regions lie at residues 205–227 (AERRKHEGLGGQRPPAPNALPSI), 246–288 (SLAN…DLHR), 332–466 (REED…DHLN), and 514–549 (ASTVAASPSYPSAPVYDTAARPPSAISAPRRQQSFG). Polar residues predominate over residues 246 to 266 (SLANGPQSLASTPQPLANGSQ). Basic and acidic residues-rich tracts occupy residues 278–288 (RGREEEEDLHR), 332–346 (REEDDEVHRSAHNAH), and 385–395 (RGRDEDDDHRS). The interval 516–545 (TVAASPSYPSAPVYDTAARPPSAISAPRRQ) is nuclear localization domain. Residues 532 to 549 (AARPPSAISAPRRQQSFG) are compositionally biased toward low complexity.

Belongs to the EFG1/PHD1/stuA family.

The protein resides in the nucleus. Transcription factor that regulates asexual reproduction. Binds the StuA-response elements (StRE) with the consensus sequence 5'-(A/T)CGCG(T/A)N(A/C)-3' at the promoters of target genes. The chain is Cell pattern formation-associated protein StuA from Gibberella moniliformis (strain M3125 / FGSC 7600) (Maize ear and stalk rot fungus).